The sequence spans 451 residues: UPF0210 protein NMC1568 (451 aa).

Belongs to the UPF0210 family. In terms of assembly, homodimer.

This is UPF0210 protein NMC1568 from Neisseria meningitidis serogroup C / serotype 2a (strain ATCC 700532 / DSM 15464 / FAM18).